Reading from the N-terminus, the 187-residue chain is MKQILDFIPLIIFFALYKMYDIYVATGALIVATAVQLIVTYALYKKVEKMQLITFVIVTIFGSMTIFFHDDNFIKWKVTIIYVVLAVGLTASHLMGKSVVKGMLGKEITLPDAIWAKINWAWVGFFSFFAGLNIYIAYELPLDVWVNFKVFGMLIATFAYMIATGVYIYKHMPKEEKNNSSDVSVDD.

5 helical membrane-spanning segments follow: residues isoleucine 22–alanine 42, methionine 50–aspartate 70, isoleucine 80–valine 100, isoleucine 118–tyrosine 138, and phenylalanine 148–isoleucine 168.

The protein belongs to the YciB family.

It is found in the cell inner membrane. Functionally, plays a role in cell envelope biogenesis, maintenance of cell envelope integrity and membrane homeostasis. In Vibrio parahaemolyticus serotype O3:K6 (strain RIMD 2210633), this protein is Inner membrane-spanning protein YciB.